The following is a 688-amino-acid chain: Glycine--tRNA ligase beta subunit (688 aa).

This sequence belongs to the class-II aminoacyl-tRNA synthetase family. In terms of assembly, tetramer of two alpha and two beta subunits.

It is found in the cytoplasm. The enzyme catalyses tRNA(Gly) + glycine + ATP = glycyl-tRNA(Gly) + AMP + diphosphate. The protein is Glycine--tRNA ligase beta subunit of Aliivibrio salmonicida (strain LFI1238) (Vibrio salmonicida (strain LFI1238)).